The primary structure comprises 352 residues: Glucose 1-dehydrogenase 1 (352 aa).

Residue cysteine 35 participates in Zn(2+) binding. Substrate is bound at residue threonine 37. 2 residues coordinate Zn(2+): histidine 60 and glutamate 61. Asparagine 83 is a substrate binding site. Positions 87, 90, 93, and 101 each coordinate Zn(2+). Residues glutamate 108, glutamine 144, and aspartate 148 each coordinate substrate. Glutamine 144 is a binding site for Zn(2+). NADP(+)-binding positions include 182 to 185 (TGTI), 204 to 206 (NKR), 264 to 266 (FGF), 292 to 294 (LIN), and lysine 341. Asparagine 294 serves as a coordination point for substrate.

It belongs to the zinc-containing alcohol dehydrogenase family. Glucose 1-dehydrogenase subfamily. Zn(2+) is required as a cofactor.

It carries out the reaction D-glucose + NAD(+) = D-glucono-1,5-lactone + NADH + H(+). The enzyme catalyses D-glucose + NADP(+) = D-glucono-1,5-lactone + NADPH + H(+). In terms of biological role, catalyzes the NAD(P)(+)-dependent oxidation of D-glucose to D-gluconate via gluconolactone. Can utilize both NAD(+) and NADP(+) as electron acceptor. Is involved in the degradation of glucose through a non-phosphorylative variant of the Entner-Doudoroff pathway. The polypeptide is Glucose 1-dehydrogenase 1 (Picrophilus torridus (strain ATCC 700027 / DSM 9790 / JCM 10055 / NBRC 100828 / KAW 2/3)).